A 686-amino-acid polypeptide reads, in one-letter code: Gamma-aminobutyric acid receptor alpha-like (686 aa).

An N-terminal signal peptide occupies residues 1–58 (MCTMPATRDASGSGDASTDLIAARSLSSHQGQRSNLRIFKLLISCCLLMLCIYPNAWP). At 97 to 393 (SSWLTQSNNH…NFHLQRHMGN (297 aa)) the chain is on the extracellular side. An N-linked (GlcNAc...) asparagine glycan is attached at N108. The cysteines at positions 233 and 247 are disulfide-linked. N292 carries an N-linked (GlcNAc...) asparagine glycan. 3 helical membrane passes run 394 to 414 (FLIQ…VSFW), 424 to 441 (VSLG…GLEA), and 456 to 476 (FFVF…AVVH). Residues 477–650 (YYTKYGSGEC…YNSVSKIDRA (174 aa)) are Cytoplasmic-facing. Residues 570-641 (KPPRADSDED…RRKGKRTPQY (72 aa)) are disordered. Positions 586 to 596 (QLRANEAPTTS) are enriched in polar residues. Over residues 597–609 (AAAAAAQAAAQAA) the composition is skewed to low complexity. A helical membrane pass occupies residues 651-671 (SRIVFPLLFILINVFYWYGYL).

This sequence belongs to the ligand-gated ion channel (TC 1.A.9) family. Gamma-aminobutyric acid receptor (TC 1.A.9.5) subfamily. Generally pentameric. There are five types of GABA(A) receptor chains: alpha, beta, gamma, delta, and rho. Interacts with Lcch3 (beta chain).

It is found in the postsynaptic cell membrane. The protein localises to the cell membrane. Functionally, GABA, an inhibitory neurotransmitter, mediates neuronal inhibition by binding to the GABA receptor and opening an integral chloride channel. May combine with the ligand-gated ion channel subunit Lcch3 to form cation-selective GABA-gated ion channels. This is Gamma-aminobutyric acid receptor alpha-like (Grd) from Drosophila melanogaster (Fruit fly).